The following is a 126-amino-acid chain: Hydrogenase maturation factor HypA (126 aa).

Position 2 (histidine 2) interacts with Ni(2+). Residues cysteine 78, cysteine 81, cysteine 97, and cysteine 100 each contribute to the Zn(2+) site.

The protein belongs to the HypA/HybF family.

In terms of biological role, involved in the maturation of [NiFe] hydrogenases. Required for nickel insertion into the metal center of the hydrogenase. This Methanococcus maripaludis (strain C5 / ATCC BAA-1333) protein is Hydrogenase maturation factor HypA.